Consider the following 409-residue polypeptide: N-acetylglucosamine-6-phosphate deacetylase (409 aa).

Residue E143 coordinates a divalent metal cation. 154-155 (AH) serves as a coordination point for substrate. A divalent metal cation-binding residues include H211 and H232. Substrate-binding positions include 235–236 (NA), R243, and 269–272 (DGIH). D294 acts as the Proton donor/acceptor in catalysis. A substrate-binding site is contributed by 328-330 (LGG).

This sequence belongs to the metallo-dependent hydrolases superfamily. NagA family. A divalent metal cation serves as cofactor.

It catalyses the reaction N-acetyl-D-glucosamine 6-phosphate + H2O = D-glucosamine 6-phosphate + acetate. The protein operates within amino-sugar metabolism; N-acetylneuraminate degradation. Its function is as follows. Hydrolyzes the N-glycolyl group from N-glycolylglucosamine 6-phosphate (GlcNGc-6-P) in the N-glycolylneuraminic acid (Neu5Gc) degradation pathway. The sequence is that of N-acetylglucosamine-6-phosphate deacetylase (Amdhd2) from Mus musculus (Mouse).